The chain runs to 509 residues: L-aspartate semialdehyde sulfurtransferase (509 aa).

Cys133 functions as the Cysteine persulfide intermediate in the catalytic mechanism. CBS domains follow at residues 394–450 and 455–509; these read LSKP…NKKT and MTRN…GGKK. Ser395, Ile399, and His421 together coordinate S-methyl-5'-thioadenosine. S-adenosyl-L-methionine-binding positions include Asp439, Thr456, Ile460, and 479–482; that span reads NISG. 497–500 is an S-methyl-5'-thioadenosine binding site; the sequence is TSED.

This sequence belongs to the L-aspartate semialdehyde sulfurtransferase family. Homodimer. May form a complex with MJ0099.

It catalyses the reaction L-aspartate 4-semialdehyde + reduced 2[4Fe-4S]-[ferredoxin] + hydrogen sulfide + 3 H(+) = oxidized 2[4Fe-4S]-[ferredoxin] + L-homocysteine + H2O. It participates in amino-acid biosynthesis. With respect to regulation, the ligand-induced conformational reorganization of the protein could be an important regulatory mechanism. Functionally, required for O-acetylhomoserine sulfhydrylase (OAHS)-independent homocysteine (Hcy) biosynthesis. Together with MJ0099, catalyzes the condensation of sulfide with aspartate semialdehyde to generate homocysteine. Likely functions through persulfide intermediate. This Methanocaldococcus jannaschii (strain ATCC 43067 / DSM 2661 / JAL-1 / JCM 10045 / NBRC 100440) (Methanococcus jannaschii) protein is L-aspartate semialdehyde sulfurtransferase.